A 240-amino-acid chain; its full sequence is Nicotinamide riboside kinase (240 aa).

Glycine 13 to threonine 21 is a binding site for ATP. Threonine 20 and aspartate 39 together coordinate Mg(2+). Catalysis depends on aspartate 39, which acts as the Proton acceptor. Substrate-binding positions include aspartate 39–tyrosine 42 and tryptophan 59–aspartate 60. Arginine 158 lines the ATP pocket. Substrate-binding positions include arginine 159 and glycine 164–tyrosine 165. ATP is bound by residues arginine 162 to glycine 164 and lysine 208 to lysine 210.

This sequence belongs to the uridine kinase family. NRK subfamily.

The enzyme catalyses beta-nicotinamide D-riboside + ATP = beta-nicotinamide D-ribonucleotide + ADP + H(+). It catalyses the reaction beta-D-ribosylnicotinate + ATP = nicotinate beta-D-ribonucleotide + ADP + H(+). It functions in the pathway cofactor biosynthesis; NAD(+) biosynthesis. Catalyzes the phosphorylation of nicotinamide riboside (NR) and nicotinic acid riboside (NaR) to form nicotinamide mononucleotide (NMN) and nicotinic acid mononucleotide (NaMN). The polypeptide is Nicotinamide riboside kinase (NRK1) (Saccharomyces cerevisiae (strain ATCC 204508 / S288c) (Baker's yeast)).